The following is a 37-amino-acid chain: GVIPKKIWETVCPTVEPWAKKCSGDIATYIKRECGKL.

Cysteine 12 and cysteine 34 are joined by a disulfide.

The protein belongs to the ectatomin family. Ectatomin-Et subfamily. As to quaternary structure, heterodimer of an A and a B chain; disulfide-linked. As to expression, expressed by the venom gland.

The protein resides in the secreted. It is found in the target cell membrane. Functionally, algogenic for animals, human and insects. At high concentrations (0.5-1 uM), it acts as a pore-forming protein that forms nonselective cation channels both in cell and artificial membranes. It is weakly selective for cation over anions channel conductance is identical in both directions. At lower concentrations (1-10 nM), this heterodimer inhibits cardiac L-type calcium currents in isolated rat cardiac ventricular myocytes. The chain is Omega/M-ectatotoxin-Et1a subunit A from Ectatomma tuberculatum (Selva ant).